Consider the following 808-residue polypeptide: Probable inorganic carbon transporter subunit DabA (808 aa).

The Zn(2+) site is built by cysteine 335, aspartate 337, histidine 497, and cysteine 512.

Belongs to the inorganic carbon transporter (TC 9.A.2) DabA family. Forms a complex with DabB. The cofactor is Zn(2+).

It localises to the cell inner membrane. In terms of biological role, part of an energy-coupled inorganic carbon pump. This Rhodopseudomonas palustris (strain TIE-1) protein is Probable inorganic carbon transporter subunit DabA.